The primary structure comprises 557 residues: Tektin-5 (557 aa).

Residues 302–386 adopt a coiled-coil conformation; that stretch reads DNIRHAQNMR…LLERAIVAKE (85 aa). 6 repeat units span residues 507–512, 513–518, 519–524, 525–530, 531–536, and 537–541. The interval 507–541 is 6 X 6 AA approximate tandem repeats of C-[GSK]-G-[GSPH]-A-[SLP]; the sequence is CSGSALCKGPASCGGGASCGGGASCGGHAPCGSAL.

Belongs to the tektin family. Microtubule inner protein component of sperm flagellar doublet microtubules. Interacts with TEKT3. Post-translationally, ubiquitinated, leading to its degradation. Deubiquitinated by USP16, promoting its stability. As to expression, strongly expressed in germ cells of the testis (at protein level). Expressed in spermatozoa. Also detected in brain.

The protein resides in the cytoplasm. The protein localises to the cytoskeleton. It localises to the flagellum axoneme. In terms of biological role, sperm-specific microtubule inner protein (MIP) part of the dynein-decorated doublet microtubules (DMTs) in flagellar axoneme. Forms an extensive interaction network in different conformations that reinforces the helix bundle composed by other tektin proteins (TEKT1 to TEKT4) and MIPs to anchor the tektin bundle onto the tubulin wall of A-tubule of the sperm flagellum. This chain is Tektin-5, found in Mus musculus (Mouse).